A 154-amino-acid polypeptide reads, in one-letter code: Ascorbate-specific PTS system EIIA component (154 aa).

One can recognise a PTS EIIA type-2 domain in the interval 6–150; it reads SLAENNSIRL…QEVLDLIDRT (145 aa). Catalysis depends on His68, which acts as the Tele-phosphohistidine intermediate. Position 68 is a phosphohistidine (His68).

The protein localises to the cytoplasm. In terms of biological role, the phosphoenolpyruvate-dependent sugar phosphotransferase system (sugar PTS), a major carbohydrate active transport system, catalyzes the phosphorylation of incoming sugar substrates concomitantly with their translocation across the cell membrane. The enzyme II UlaABC PTS system is involved in ascorbate transport. The polypeptide is Ascorbate-specific PTS system EIIA component (ulaC) (Salmonella typhi).